A 425-amino-acid chain; its full sequence is UDP-N-acetylglucosamine 1-carboxyvinyltransferase (425 aa).

22-23 (KN) contributes to the phosphoenolpyruvate binding site. Arg93 contributes to the UDP-N-acetyl-alpha-D-glucosamine binding site. Cys117 acts as the Proton donor in catalysis. A 2-(S-cysteinyl)pyruvic acid O-phosphothioketal modification is found at Cys117. UDP-N-acetyl-alpha-D-glucosamine-binding positions include 122–126 (RPIDL), Asp307, and Val329.

The protein belongs to the EPSP synthase family. MurA subfamily.

The protein localises to the cytoplasm. It carries out the reaction phosphoenolpyruvate + UDP-N-acetyl-alpha-D-glucosamine = UDP-N-acetyl-3-O-(1-carboxyvinyl)-alpha-D-glucosamine + phosphate. It participates in cell wall biogenesis; peptidoglycan biosynthesis. Its function is as follows. Cell wall formation. Adds enolpyruvyl to UDP-N-acetylglucosamine. The polypeptide is UDP-N-acetylglucosamine 1-carboxyvinyltransferase (Prosthecochloris aestuarii (strain DSM 271 / SK 413)).